A 200-amino-acid polypeptide reads, in one-letter code: MELDSGKPLSLLTLDEIDQHEGGIIQSFRTGHTTPYPDPADWLNSEEPPPGVFVTSVEKVLNWSRHYSLWPVMFGLACCAIEMMCMAASRWDLARFGMDIFRASPRQADLMIVAGTLTWKMAPWLKRIYDQMPEPKWVLAMGACGTSGGLFRDSYSVVPGFNMVVPVDVYVPGCPPRPEALLRAIMDIHEKIDKTRIIKR.

The [4Fe-4S] cluster site is built by cysteine 78, cysteine 79, cysteine 144, and cysteine 174.

This sequence belongs to the complex I 20 kDa subunit family. As to quaternary structure, NDH-1 is composed of 14 different subunits. Subunits NuoB, C, D, E, F, and G constitute the peripheral sector of the complex. It depends on [4Fe-4S] cluster as a cofactor.

Its subcellular location is the cell membrane. The catalysed reaction is a quinone + NADH + 5 H(+)(in) = a quinol + NAD(+) + 4 H(+)(out). In terms of biological role, NDH-1 shuttles electrons from NADH, via FMN and iron-sulfur (Fe-S) centers, to quinones in the respiratory chain. The immediate electron acceptor for the enzyme in this species is believed to be ubiquinone. Couples the redox reaction to proton translocation (for every two electrons transferred, four hydrogen ions are translocated across the cytoplasmic membrane), and thus conserves the redox energy in a proton gradient. This Dehalococcoides mccartyi (strain ATCC BAA-2266 / KCTC 15142 / 195) (Dehalococcoides ethenogenes (strain 195)) protein is NADH-quinone oxidoreductase subunit B.